We begin with the raw amino-acid sequence, 497 residues long: Proline--tRNA ligase (497 aa).

It belongs to the class-II aminoacyl-tRNA synthetase family. ProS type 3 subfamily. Homodimer.

The protein resides in the cytoplasm. The catalysed reaction is tRNA(Pro) + L-proline + ATP = L-prolyl-tRNA(Pro) + AMP + diphosphate. Functionally, catalyzes the attachment of proline to tRNA(Pro) in a two-step reaction: proline is first activated by ATP to form Pro-AMP and then transferred to the acceptor end of tRNA(Pro). This Deinococcus geothermalis (strain DSM 11300 / CIP 105573 / AG-3a) protein is Proline--tRNA ligase.